A 227-amino-acid chain; its full sequence is Enolase-phosphatase E1 (227 aa).

The protein belongs to the HAD-like hydrolase superfamily. MasA/MtnC family. In terms of assembly, monomer. Mg(2+) is required as a cofactor.

The enzyme catalyses 5-methylsulfanyl-2,3-dioxopentyl phosphate + H2O = 1,2-dihydroxy-5-(methylsulfanyl)pent-1-en-3-one + phosphate. It participates in amino-acid biosynthesis; L-methionine biosynthesis via salvage pathway; L-methionine from S-methyl-5-thio-alpha-D-ribose 1-phosphate: step 3/6. It functions in the pathway amino-acid biosynthesis; L-methionine biosynthesis via salvage pathway; L-methionine from S-methyl-5-thio-alpha-D-ribose 1-phosphate: step 4/6. Functionally, bifunctional enzyme that catalyzes the enolization of 2,3-diketo-5-methylthiopentyl-1-phosphate (DK-MTP-1-P) into the intermediate 2-hydroxy-3-keto-5-methylthiopentenyl-1-phosphate (HK-MTPenyl-1-P), which is then dephosphorylated to form the acireductone 1,2-dihydroxy-3-keto-5-methylthiopentene (DHK-MTPene). The polypeptide is Enolase-phosphatase E1 (Methylococcus capsulatus (strain ATCC 33009 / NCIMB 11132 / Bath)).